Here is a 59-residue protein sequence, read N- to C-terminus: Large ribosomal subunit protein uL30 (59 aa).

Belongs to the universal ribosomal protein uL30 family. As to quaternary structure, part of the 50S ribosomal subunit.

The polypeptide is Large ribosomal subunit protein uL30 (Aeromonas hydrophila subsp. hydrophila (strain ATCC 7966 / DSM 30187 / BCRC 13018 / CCUG 14551 / JCM 1027 / KCTC 2358 / NCIMB 9240 / NCTC 8049)).